An 86-amino-acid polypeptide reads, in one-letter code: Small ribosomal subunit protein bS20 (86 aa).

Residues 1–25 (MANIKSAIKRAKTSEKRRVANSQEK) are disordered.

It belongs to the bacterial ribosomal protein bS20 family.

Functionally, binds directly to 16S ribosomal RNA. This Exiguobacterium sp. (strain ATCC BAA-1283 / AT1b) protein is Small ribosomal subunit protein bS20.